A 404-amino-acid polypeptide reads, in one-letter code: E3 ubiquitin-protein ligase RNF128 (404 aa).

A signal peptide spans 1–31; the sequence is MGALKMRCQCFPLPYLSLLALLLLNLSLTRA. The PA domain occupies 62–166; it reads DSPIERAAGL…LKGNEIVDLI (105 aa). A helical transmembrane segment spans residues 191-211; it reads IFFVSVSFFIVTAATVGYFIF. The RING-type; atypical zinc-finger motif lies at 260–301; sequence CAVCIEPYKPSDVVRILTCNHFFHKNCIDPWLLEHRTCPMCK. The segment at 336-356 is disordered; the sequence is ITEEENHSETASSGYASVRGG.

Post-translationally, auto-ubiquitinated. Expressed in the cement gland, cranial placodes, and the pronephros.

The protein resides in the endomembrane system. Its subcellular location is the cytoplasm. It localises to the perinuclear region. The enzyme catalyses S-ubiquitinyl-[E2 ubiquitin-conjugating enzyme]-L-cysteine + [acceptor protein]-L-lysine = [E2 ubiquitin-conjugating enzyme]-L-cysteine + N(6)-ubiquitinyl-[acceptor protein]-L-lysine.. The protein operates within protein modification; protein ubiquitination. In terms of biological role, E3 ubiquitin-protein ligase that catalyzes polyubiquitin chains. Converts epidermis into cement gland and neural tissue in whole embryos. This chain is E3 ubiquitin-protein ligase RNF128 (rnf128), found in Xenopus laevis (African clawed frog).